The chain runs to 146 residues: Hemoglobin subunit beta (146 aa).

Position 1 is an N-acetylvaline (Val1). One can recognise a Globin domain in the interval 2–146 (QLSGEEKAAV…VANALAHKYH (145 aa)). Ser44 carries the phosphoserine modification. Lys59 is subject to N6-acetyllysine. His63 lines the heme b pocket. At Lys82 the chain carries N6-acetyllysine. His92 lines the heme b pocket. At Cys93 the chain carries S-nitrosocysteine. Lys144 is modified (N6-acetyllysine).

This sequence belongs to the globin family. Heterotetramer of two alpha chains and two beta chains. In terms of tissue distribution, red blood cells.

Involved in oxygen transport from the lung to the various peripheral tissues. In Equus hemionus kulan (Turkmenian kulan), this protein is Hemoglobin subunit beta (HBB).